A 324-amino-acid polypeptide reads, in one-letter code: Phospho-N-acetylmuramoyl-pentapeptide-transferase (324 aa).

A run of 10 helical transmembrane segments spans residues 5–25 (VILF…PIFI), 52–72 (PTMG…VMTM), 77–97 (VSMN…LGFL), 117–137 (LIGQ…QGMP), 147–167 (LSFD…VGGS), 176–196 (LDGL…ILAW), 203–223 (VAIF…FNAH), 227–247 (VFMG…IAIL), 250–270 (LEIL…SVIL), and 302–322 (VVVT…YIEV).

It belongs to the glycosyltransferase 4 family. MraY subfamily. Mg(2+) is required as a cofactor.

The protein resides in the cell membrane. It carries out the reaction UDP-N-acetyl-alpha-D-muramoyl-L-alanyl-gamma-D-glutamyl-meso-2,6-diaminopimeloyl-D-alanyl-D-alanine + di-trans,octa-cis-undecaprenyl phosphate = di-trans,octa-cis-undecaprenyl diphospho-N-acetyl-alpha-D-muramoyl-L-alanyl-D-glutamyl-meso-2,6-diaminopimeloyl-D-alanyl-D-alanine + UMP. It participates in cell wall biogenesis; peptidoglycan biosynthesis. Functionally, catalyzes the initial step of the lipid cycle reactions in the biosynthesis of the cell wall peptidoglycan: transfers peptidoglycan precursor phospho-MurNAc-pentapeptide from UDP-MurNAc-pentapeptide onto the lipid carrier undecaprenyl phosphate, yielding undecaprenyl-pyrophosphoryl-MurNAc-pentapeptide, known as lipid I. This is Phospho-N-acetylmuramoyl-pentapeptide-transferase from Bacillus licheniformis (strain ATCC 14580 / DSM 13 / JCM 2505 / CCUG 7422 / NBRC 12200 / NCIMB 9375 / NCTC 10341 / NRRL NRS-1264 / Gibson 46).